Consider the following 807-residue polypeptide: Glycerol-3-phosphate acyltransferase (807 aa).

Positions 305 to 310 (CHRSHM) match the HXXXXD motif motif.

It belongs to the GPAT/DAPAT family.

It localises to the cell inner membrane. The catalysed reaction is sn-glycerol 3-phosphate + an acyl-CoA = a 1-acyl-sn-glycero-3-phosphate + CoA. It participates in phospholipid metabolism; CDP-diacylglycerol biosynthesis; CDP-diacylglycerol from sn-glycerol 3-phosphate: step 1/3. This chain is Glycerol-3-phosphate acyltransferase, found in Aliivibrio fischeri (strain MJ11) (Vibrio fischeri).